The sequence spans 695 residues: Methionine synthase reductase (695 aa).

The Flavodoxin-like domain occupies 4–147 (FLLLYATQRG…VVEPWINGLW (144 aa)). Residues 10 to 14 (TQRGQ) and 93 to 124 (LLGL…QRFY) each bind FMN. The hinge stretch occupies residues 166–245 (TLTMASHASR…ASLNIPSLPP (80 aa)). Phosphoserine occurs at positions 171 and 187. The 263-residue stretch at 269 to 531 (DPVFHVPVSK…PRTTNSFHLP (263 aa)) folds into the FAD-binding FR-type domain. Residue lysine 289 participates in NADP(+) binding. Residues 449–452 (RPYS) and 485–488 (GVCT) each bind FAD. NADP(+)-binding positions include 608-609 (SR), 622-624 (YVQ), and aspartate 657. Residue tryptophan 695 participates in FAD binding.

Forms a multiprotein complex with MMACHC, MMADHC and MTR. FAD serves as cofactor. FMN is required as a cofactor.

Its subcellular location is the cytoplasm. The catalysed reaction is 2 methylcob(III)alamin-[methionine synthase] + 2 S-adenosyl-L-homocysteine + NADP(+) + H(+) = 2 cob(II)alamin-[methionine synthase] + 2 S-adenosyl-L-methionine + NADPH. It catalyses the reaction 2 cob(II)alamin + A + 2 H2O + 2 H(+) = 2 aquacob(III)alamin + AH2. Its function is as follows. Key enzyme in methionine and folate homeostasis responsible for the reactivation of methionine synthase (MTR/MS) activity by catalyzing the reductive methylation of MTR-bound cob(II)alamin. Cobalamin (vitamin B12) forms a complex with MTR to serve as an intermediary in methyl transfer reactions that cycles between MTR-bound methylcob(III)alamin and MTR bound-cob(I)alamin forms, and occasional oxidative escape of the cob(I)alamin intermediate during the catalytic cycle leads to the inactive cob(II)alamin species. The processing of cobalamin in the cytosol occurs in a multiprotein complex composed of at least MMACHC, MMADHC, MTRR and MTR which may contribute to shuttle safely and efficiently cobalamin towards MTR in order to produce methionine. Also necessary for the utilization of methyl groups from the folate cycle, thereby affecting transgenerational epigenetic inheritance. Also acts as a molecular chaperone for methionine synthase by stabilizing apoMTR and incorporating methylcob(III)alamin into apoMTR to form the holoenzyme. Also serves as an aquacob(III)alamin reductase by reducing aquacob(III)alamin to cob(II)alamin; this reduction leads to stimulation of the conversion of apoMTR and aquacob(III)alamin to MTR holoenzyme. The chain is Methionine synthase reductase (MTRR) from Bos taurus (Bovine).